A 54-amino-acid chain; its full sequence is MCTTLFLLSTLAMLWRRRFANRVQPEPSDVDGAARGSSLDADPQSSGREKEPLK.

Residue cysteine 2 is the site of S-palmitoyl cysteine attachment. The segment at 25 to 54 is disordered; sequence PEPSDVDGAARGSSLDADPQSSGREKEPLK.

It belongs to the PRCD family. As to quaternary structure, interacts with RHO/rhodopsin; the interaction promotes PRCD stability. Post-translationally, palmitoylated at Cys-2. Palmitoylation is essential for protein stability and trafficking to the photoreceptor outer segment, but does not appear to be essential for membrane localization. Probably palmitoylated by ZDHHC3. In terms of processing, phosphorylated.

It localises to the cell projection. It is found in the cilium. The protein resides in the photoreceptor outer segment. The protein localises to the membrane. Its subcellular location is the endoplasmic reticulum. It localises to the golgi apparatus. In terms of biological role, involved in vision. The chain is Photoreceptor disk component PRCD from Homo sapiens (Human).